Consider the following 668-residue polypeptide: DNA ligase (668 aa).

NAD(+) contacts are provided by residues Asp-31 to Asp-35, Ser-80 to Leu-81, and Glu-112. Lys-114 acts as the N6-AMP-lysine intermediate in catalysis. NAD(+) contacts are provided by Arg-135, Glu-172, Lys-289, and Lys-313. Positions 407, 410, 425, and 431 each coordinate Zn(2+). Residues Ser-591–Asn-668 enclose the BRCT domain.

The protein belongs to the NAD-dependent DNA ligase family. LigA subfamily. It depends on Mg(2+) as a cofactor. The cofactor is Mn(2+).

It carries out the reaction NAD(+) + (deoxyribonucleotide)n-3'-hydroxyl + 5'-phospho-(deoxyribonucleotide)m = (deoxyribonucleotide)n+m + AMP + beta-nicotinamide D-nucleotide.. Its function is as follows. DNA ligase that catalyzes the formation of phosphodiester linkages between 5'-phosphoryl and 3'-hydroxyl groups in double-stranded DNA using NAD as a coenzyme and as the energy source for the reaction. It is essential for DNA replication and repair of damaged DNA. The protein is DNA ligase of Aliivibrio fischeri (strain ATCC 700601 / ES114) (Vibrio fischeri).